The chain runs to 300 residues: Porphobilinogen deaminase (300 aa).

Cys242 carries the S-(dipyrrolylmethanemethyl)cysteine modification.

It belongs to the HMBS family. In terms of assembly, monomer. It depends on dipyrromethane as a cofactor.

It catalyses the reaction 4 porphobilinogen + H2O = hydroxymethylbilane + 4 NH4(+). The protein operates within porphyrin-containing compound metabolism; protoporphyrin-IX biosynthesis; coproporphyrinogen-III from 5-aminolevulinate: step 2/4. Functionally, tetrapolymerization of the monopyrrole PBG into the hydroxymethylbilane pre-uroporphyrinogen in several discrete steps. This chain is Porphobilinogen deaminase, found in Blochmanniella pennsylvanica (strain BPEN).